The chain runs to 453 residues: Mogroside IIIx synthase (453 aa).

His21 functions as the Proton acceptor in the catalytic mechanism. The active-site Charge relay is Asp122. 8 residues coordinate UDP-alpha-D-glucose: Ser273, Gln336, Trp354, Asn355, Ser356, Glu359, Asp375, and Gln376.

This sequence belongs to the UDP-glycosyltransferase family. As to expression, highly expressed in mature fruits.

It carries out the reaction mogroside IIE + UDP-alpha-D-glucose = mogroside IIIX + UDP + H(+). The enzyme catalyses mogroside III + UDP-alpha-D-glucose = mogroside IV + UDP + H(+). The catalysed reaction is mogroside III + UDP-alpha-D-glucose = siamenoside I + UDP + H(+). It catalyses the reaction mogroside IV + UDP-alpha-D-glucose = mogroside V + UDP + H(+). It participates in secondary metabolite biosynthesis; terpenoid biosynthesis. UDP-glycosyltransferase involved in the biosynthesis of cucurbitacin and mogroside tetracyclic triterpene natural products (e.g. siamenoside I and mogrosides IV, V and VI). Cucurbitacins have cytotoxic properties and exhibit deterrent taste as a defense barrier against herbivores. Mogrosides are nonsugar highly oxygenated compounds used as high-intensity zero-calorie sweeteners; they also possess pharmacological properties such as regulating immunity, lowering blood sugar and lipid levels, protecting the liver, and acting as antioxidants and antitumor agents. Catalyzes the branched glucosylations of mogroside II-E, mogroside III and mogroside IV. The protein is Mogroside IIIx synthase of Siraitia grosvenorii (Monk's fruit).